We begin with the raw amino-acid sequence, 190 residues long: Adenylate kinase (190 aa).

An ATP-binding site is contributed by 12–17 (GSGKTT). The NMP stretch occupies residues 33–62 (STGDLLRAEVASGSELGKTIDSFISKGNLV). AMP contacts are provided by residues threonine 34, arginine 39, 60-62 (NLV), 87-90 (GYPR), and glutamine 94. An LID region spans residues 129 to 135 (GRARGAD). An ATP-binding site is contributed by arginine 130. AMP contacts are provided by arginine 132 and arginine 144. Position 172 (arginine 172) interacts with ATP.

Belongs to the adenylate kinase family. In terms of assembly, monomer.

Its subcellular location is the cytoplasm. The catalysed reaction is AMP + ATP = 2 ADP. It participates in purine metabolism; AMP biosynthesis via salvage pathway; AMP from ADP: step 1/1. In terms of biological role, catalyzes the reversible transfer of the terminal phosphate group between ATP and AMP. Plays an important role in cellular energy homeostasis and in adenine nucleotide metabolism. This Campylobacter lari (strain RM2100 / D67 / ATCC BAA-1060) protein is Adenylate kinase.